The primary structure comprises 242 residues: Carboxy-S-adenosyl-L-methionine synthase (242 aa).

Residues Y39, 64–66, 89–90, 117–118, N132, and R199 each bind S-adenosyl-L-methionine; these read GCS, DN, and DI.

The protein belongs to the class I-like SAM-binding methyltransferase superfamily. Cx-SAM synthase family. Homodimer.

It catalyses the reaction prephenate + S-adenosyl-L-methionine = carboxy-S-adenosyl-L-methionine + 3-phenylpyruvate + H2O. Functionally, catalyzes the conversion of S-adenosyl-L-methionine (SAM) to carboxy-S-adenosyl-L-methionine (Cx-SAM). The chain is Carboxy-S-adenosyl-L-methionine synthase from Vibrio atlanticus (strain LGP32) (Vibrio splendidus (strain Mel32)).